The chain runs to 442 residues: MHIADQSGAAAAQRKPLYAQLYVQVLVAITVGILLGHYYPSIGESMKPLGDAFIKLVKMIIAPVIFLTVATGIAGMSDLQKVGRVAGKAMLYFLTFSTLALIIGLVVANVVQPGAGFNIDPATLDASTVNTYAAKAHDQSVTGFLMNIIPGTIVGAFADGDILQVLFFSVLFGIALALVGDKGAPVLNFLQALMAPMFKLVSVLMKAAPIGAFGAMAFTIGKYGIGSVINLAMLVGTFYATSLLFVFVVLGAVCRYNGFSILSLLRYIKEELLLVLGTSSSEAALPSLMEKMEKAGAKRSVVGLVIPTGYSFNLDGTNIYMTLAALFIAQATNIHLSMGDQILLLLVAMLSSKGAAGITGAGFITLAATLSVVPSVPVAGMALILGVDRFMSECRALTNFIGNAVATLVVARWEGELDEAKLARALAGTADDSLPADIVPAE.

9 consecutive transmembrane segments (helical) span residues 20–39 (QLYVQVLVAITVGILLGHYY), 52–74 (AFIKLVKMIIAPVIFLTVATGIA), 89–111 (AMLYFLTFSTLALIIGLVVANVV), 141–158 (VTGFLMNIIPGTIVGAFA), 162–179 (ILQVLFFSVLFGIALALV), 200–221 (LVSVLMKAAPIGAFGAMAFTIG), 231–253 (LAMLVGTFYATSLLFVFVVLGAV), 342–364 (ILLLLVAMLSSKGAAGITGAGFI), and 368–387 (ATLSVVPSVPVAGMALILGV).

Belongs to the dicarboxylate/amino acid:cation symporter (DAACS) (TC 2.A.23) family.

The protein resides in the cell inner membrane. Its function is as follows. Responsible for the transport of dicarboxylates such as succinate, fumarate, and malate from the periplasm across the membrane. This transport system plays an important role in the energy supply of rhizobium-legume symbionts. In Mesorhizobium japonicum (strain LMG 29417 / CECT 9101 / MAFF 303099) (Mesorhizobium loti (strain MAFF 303099)), this protein is C4-dicarboxylate transport protein 2 (dctA2).